We begin with the raw amino-acid sequence, 248 residues long: Serine/arginine-rich splicing factor 1 (248 aa).

Ser-2 carries the post-translational modification N-acetylserine. Phosphoserine is present on Ser-2. An RRM 1 domain is found at 16-91 (CRIYVGNLPP…YRLRVEFPRS (76 aa)). Lys-30 participates in a covalent cross-link: Glycyl lysine isopeptide (Lys-Gly) (interchain with G-Cter in SUMO2). Lys-38 bears the N6-acetyllysine; alternate mark. Lys-38 participates in a covalent cross-link: Glycyl lysine isopeptide (Lys-Gly) (interchain with G-Cter in SUMO2); alternate. The interval 88–134 (FPRSGRGTGRGGGGGGGGGAPRGRYGPPSRRSENRVVVSGLPPSGSW) is disordered. Arg-93, Arg-97, and Arg-109 each carry asymmetric dimethylarginine; alternate. An omega-N-methylarginine; alternate mark is found at Arg-93, Arg-97, and Arg-109. Over residues 93 to 108 (RGTGRGGGGGGGGGAP) the composition is skewed to gly residues. Omega-N-methylarginine is present on Arg-111. In terms of domain architecture, RRM 2 spans 121-195 (NRVVVSGLPP…ETAYIRVKVD (75 aa)). Ser-133 is modified (phosphoserine). At Lys-179 the chain carries N6-acetyllysine. The interval 191–248 (RVKVDGPRSPSYGRSRSRSRSRSRNRSRSNSRSRSYSPRRSRGSPRYSPRHSRSRSRT) is disordered. The interaction with SAFB1 stretch occupies residues 198-247 (RSPSYGRSRSRSRSRSRNRSRSNSRSRSYSPRRSRGSPRYSPRHSRSRSR). Residues Ser-199 and Ser-201 each carry the phosphoserine modification. Position 202 is a phosphotyrosine (Tyr-202). A phosphoserine mark is found at Ser-205, Ser-207, Ser-209, Ser-231, Ser-234, and Ser-238. Residues 205 to 248 (SRSRSRSRSRNRSRSNSRSRSYSPRRSRGSPRYSPRHSRSRSRT) are compositionally biased toward basic residues.

It belongs to the splicing factor SR family. Consists of two polypeptides of p32 and p33. Identified in the spliceosome C complex. Component of a ribonucleoprotein complex containing mRNAs and RNA-binding proteins including DDX5, HNRNPH2 and SRSF1 as well as splicing regulator ARVCF. In vitro, self-associates and binds SRSF2, SNRNP70 and U2AF1 but not U2AF2. Binds SREK1/SFRS12. Interacts with SAFB/SAFB1. Interacts with PSIP1/LEDGF. Interacts with RSRC1 (via Arg/Ser-rich domain). Interacts with ZRSR2/U2AF1-RS2. Interacts with CCDC55 (via C-terminus). Interacts with SRPK1 and a sliding docking interaction is essential for its sequential and processive phosphorylation by SRPK1. Interacts with NXF1. Interacts with CCNL1, CCNL2 and CDK11B. Interacts with RRP1B. Interacts (when phosphorylated in its RS domain) with TNPO3; promoting nuclear import. Interacts with ILDR1 (via C-terminus) and ILDR2. In terms of processing, phosphorylated by CLK1, CLK2, CLK3 and CLK4. Phosphorylated by SRPK1 at multiple serines in its RS domain via a directional (C-terminal to N-terminal) and a dual-track mechanism incorporating both processive phosphorylation (in which the kinase stays attached to the substrate after each round of phosphorylation) and distributive phosphorylation steps (in which the kinase and substrate dissociate after each phosphorylation event). The RS domain of SRSF1 binds to a docking groove in the large lobe of the kinase domain of SRPK1 and this induces certain structural changes in SRPK1 and/or RRM 2 domain of SRSF1, allowing RRM 2 to bind the kinase and initiate phosphorylation. The cycles continue for several phosphorylation steps in a processive manner (steps 1-8) until the last few phosphorylation steps (approximately steps 9-12). During that time, a mechanical stress induces the unfolding of the beta-4 motif in RRM 2, which then docks at the docking groove of SRPK1. This also signals RRM 2 to begin to dissociate, which facilitates SRSF1 dissociation after phosphorylation is completed. Post-translationally, asymmetrically dimethylated at arginines, probably by PRMT1, methylation promotes localization to nuclear speckles.

Its subcellular location is the cytoplasm. It is found in the nucleus speckle. In terms of biological role, plays a role in preventing exon skipping, ensuring the accuracy of splicing and regulating alternative splicing. Interacts with other spliceosomal components, via the RS domains, to form a bridge between the 5'- and 3'-splice site binding components, U1 snRNP and U2AF. Can stimulate binding of U1 snRNP to a 5'-splice site-containing pre-mRNA. Binds to purine-rich RNA sequences, either the octamer, 5'-RGAAGAAC-3' (r=A or G) or the decamers, AGGACAGAGC/AGGACGAAGC. Binds preferentially to the 5'-CGAGGCG-3' motif in vitro. Three copies of the octamer constitute a powerful splicing enhancer in vitro, the ASF/SF2 splicing enhancer (ASE) which can specifically activate ASE-dependent splicing. May function as export adapter involved in mRNA nuclear export through the TAP/NXF1 pathway. The polypeptide is Serine/arginine-rich splicing factor 1 (SRSF1) (Pongo abelii (Sumatran orangutan)).